We begin with the raw amino-acid sequence, 63 residues long: Cecropin-C (63 aa).

Positions 1-23 (MNFYKIFVFVALILAISIGQSEA) are cleaved as a signal peptide. At R62 the chain carries Arginine amide.

It belongs to the cecropin family.

Its subcellular location is the secreted. Its function is as follows. Cecropins have lytic and antibacterial activity against several Gram-positive and Gram-negative bacteria. The chain is Cecropin-C (CecC) from Drosophila mauritiana (Fruit fly).